The following is a 707-amino-acid chain: ATP-dependent RNA helicase DHX33 (707 aa).

The tract at residues 1–64 (MPEEAGFPPA…LAQPSASPYP (64 aa)) is disordered. The interval 1 to 80 (MPEEAGFPPA…RRSLPIFQAR (80 aa)) is required for nucleolar location. Over residues 39-49 (GSGGRGGGGGR) the composition is skewed to gly residues. Positions 50–64 (RQQPPLAQPSASPYP) are enriched in low complexity. In terms of domain architecture, Helicase ATP-binding spans 84 to 252 (LAQLRNLDNA…FNGAPVLYLE (169 aa)). 97–104 (GETGSGKT) is an ATP binding site. The DEAH box motif lies at 194–197 (DEAH). Residues 277 to 450 (SVFQIHQEAP…SVMLQLLAMK (174 aa)) enclose the Helicase C-terminal domain. The HA2; required for interaction with EIF3G and RPL26 stretch occupies residues 471–562 (AIAQLDLLGA…ISSEGDHMTL (92 aa)). The Critical for rDNA-binding signature appears at 547-558 (GVRKKFISSEGD).

Belongs to the DEAD box helicase family. DEAH subfamily. As to quaternary structure, interacts with UBTF. Interacts with DDX3X, EIF3G and EIF3H; the interaction is independent of RNA. Interacts (via HA2 region and Helicase C-terminal domain) with the components of the large ribosomal subunit RPL3, RPL7, RPL26 and RPL27. Interacts (via DEAH box) with NLRP3 (via NACHT domain). Binds to mRNA. Binds to double-stranded RNA (via the helicase C-terminal domain). Interacts (via the helicase C-terminal domain) with MAVS. In terms of processing, ubiquitinated, leading to its degradation by the proteasome. Deubiquitinated by USP36.

Its subcellular location is the nucleus. The protein resides in the nucleolus. It is found in the nucleoplasm. It localises to the cytoplasm. The protein localises to the inflammasome. It carries out the reaction ATP + H2O = ADP + phosphate + H(+). Implicated in nucleolar organization, ribosome biogenesis, protein synthesis and cytoplasmic dsRNA sensing. Stimulates RNA polymerase I transcription of the 47S precursor rRNA. Associates with ribosomal DNA (rDNA) loci where it is involved in POLR1A recruitment. In the cytoplasm, promotes elongation-competent 80S ribosome assembly at the late stage of mRNA translation initiation. Senses cytosolic dsRNA mediating NLRP3 inflammasome formation in macrophages and type I interferon production in myeloid dendritic cells. Required for NLRP3 activation induced by viral dsRNA and bacterial RNA. In dendritic cells, required for induction of type I interferon production induced by cytoplasmic dsRNA via the activation of MAPK and NF-kappa-B signaling pathways. This chain is ATP-dependent RNA helicase DHX33, found in Homo sapiens (Human).